A 666-amino-acid polypeptide reads, in one-letter code: ESX-1 secretion-associated protein EspI (666 aa).

Positions 1 to 15 (MAADYDKLFRPHEGM) are enriched in basic and acidic residues. Residues 1–378 (MAADYDKLFR…ATKPPKVVSQ (378 aa)) form a disordered region. Low complexity predominate over residues 22-31 (AAQPFFDPSA). Pro residues-rich tracts occupy residues 64 to 80 (APPPPPPPPPPPPPTPM), 87 to 144 (PPSP…PAPT), and 188 to 205 (PAPPWAKMPIGEPPPAPS). A compositionally biased stretch (basic residues) spans 222-231 (HSRRARRGHR). The span at 284–297 (PTRPAPTEPPPSPS) shows a compositional bias: pro residues. The segment covering 357 to 371 (PKVKKVKPQKPKATK) has biased composition (basic residues). 424–431 (LKGGAGKT) contacts ATP.

In terms of biological role, required to repress ESX-1-mediated secretion under low ATP conditions. This function requires the ATP-binding motif. The protein is ESX-1 secretion-associated protein EspI of Mycobacterium tuberculosis (strain CDC 1551 / Oshkosh).